The following is a 386-amino-acid chain: Glutamate 5-kinase (386 aa).

Residue Lys28 participates in ATP binding. Ser68, Asp155, and Asn167 together coordinate substrate. 187–188 (TD) contributes to the ATP binding site. A PUA domain is found at 294–372 (RGRLVLDDGA…EKIESILGYI (79 aa)).

The protein belongs to the glutamate 5-kinase family.

Its subcellular location is the cytoplasm. The enzyme catalyses L-glutamate + ATP = L-glutamyl 5-phosphate + ADP. Its pathway is amino-acid biosynthesis; L-proline biosynthesis; L-glutamate 5-semialdehyde from L-glutamate: step 1/2. Catalyzes the transfer of a phosphate group to glutamate to form L-glutamate 5-phosphate. This is Glutamate 5-kinase from Hahella chejuensis (strain KCTC 2396).